The following is a 200-amino-acid chain: Putative 3-methyladenine DNA glycosylase (200 aa).

This sequence belongs to the DNA glycosylase MPG family.

The polypeptide is Putative 3-methyladenine DNA glycosylase (Rhodopseudomonas palustris (strain BisB18)).